The sequence spans 373 residues: CASP-like protein UU6 (373 aa).

2 disordered regions span residues 1–100 and 172–195; these read MGTL…GSEG and TKETETTPESSRASDEDAPTPKKK. Residues 1–204 are Cytoplasmic-facing; the sequence is MGTLTDPTVD…KHRLRKHLTA (204 aa). Polar residues predominate over residues 56-74; sequence KTNTGNAAESTASTENGET. Residues 205-225 form a helical membrane-spanning segment; the sequence is IGAYSFAFRFSETVLSLIAIV. Over 226-253 the chain is Extracellular; the sequence is VMCSTRGSMRTDGVDFGTLKFNHFQAYR. Residues 254 to 274 form a helical membrane-spanning segment; the sequence is YLVAVNVIVFVYSTFQFIQLL. Residues 275–276 are Cytoplasmic-facing; the sequence is YT. Residues 277–297 traverse the membrane as a helical segment; the sequence is VILGISFIPSIFISTWMTFGF. At 298–342 the chain is on the extracellular side; it reads DQLFLYLLLSASTSAATVANMSYTGEMGIQLCSRFDVGSFCSKAD. N-linked (GlcNAc...) asparagine glycosylation occurs at Asn317. The chain crosses the membrane as a helical span at residues 343–363; sequence VAVTMSFFAVLAMLSSTILAI. Topologically, residues 364 to 373 are cytoplasmic; the sequence is YRIAVLLREY.

It belongs to the Casparian strip membrane proteins (CASP) family. As to quaternary structure, homodimer and heterodimers.

It is found in the cell membrane. In Physcomitrium patens (Spreading-leaved earth moss), this protein is CASP-like protein UU6.